Here is a 156-residue protein sequence, read N- to C-terminus: uncharacterized protein (156 aa).

2 helical membrane-spanning segments follow: residues 46 to 66 and 114 to 134; these read GLVL…AGVV and IIDI…IVAL.

The protein resides in the cell membrane. This is an uncharacterized protein from Haemophilus influenzae (strain ATCC 51907 / DSM 11121 / KW20 / Rd).